The chain runs to 250 residues: 2,3-bisphosphoglycerate-dependent phosphoglycerate mutase (250 aa).

Substrate-binding positions include R10–N17, T23–G24, R62, E89–Y92, K100, R116–R117, and G185–N186. H11 (tele-phosphohistidine intermediate) is an active-site residue. E89 (proton donor/acceptor) is an active-site residue.

It belongs to the phosphoglycerate mutase family. BPG-dependent PGAM subfamily. As to quaternary structure, homodimer.

It catalyses the reaction (2R)-2-phosphoglycerate = (2R)-3-phosphoglycerate. The protein operates within carbohydrate degradation; glycolysis; pyruvate from D-glyceraldehyde 3-phosphate: step 3/5. In terms of biological role, catalyzes the interconversion of 2-phosphoglycerate and 3-phosphoglycerate. The protein is 2,3-bisphosphoglycerate-dependent phosphoglycerate mutase of Pectobacterium atrosepticum (strain SCRI 1043 / ATCC BAA-672) (Erwinia carotovora subsp. atroseptica).